A 432-amino-acid polypeptide reads, in one-letter code: Adenosine 3'-phospho 5'-phosphosulfate transporter 1 (432 aa).

9 consecutive transmembrane segments (helical) span residues 5-25 (WWAV…ETPE), 40-60 (VVNA…VQYF), 109-129 (ALKL…WGVL), 154-174 (FLVL…CVLC), 238-258 (WEYL…LSSG), 265-285 (PATT…DSFT), 299-319 (SVQM…GSLL), 353-373 (LFIF…IMTL), and 387-407 (GHTV…ALLL). Ser-427 carries the phosphoserine modification.

Belongs to the nucleotide-sugar transporter family. SLC35B subfamily. In terms of tissue distribution, highly expressed in the placenta, pancreas, mammary gland and skeletal muscle. Weakly or not expressed in colon, heart and prostate. Expressed in the brain, predominantly in frontal lobe gray matter, subcortical frontal white matter and cerebellum.

The protein localises to the golgi apparatus membrane. The catalysed reaction is 3'-phosphoadenylyl sulfate(in) + adenosine 3',5'-bisphosphate(out) = 3'-phosphoadenylyl sulfate(out) + adenosine 3',5'-bisphosphate(in). Probably functions as a 3'-phosphoadenylyl sulfate:adenosine 3',5'-bisphosphate antiporter at the Golgi membranes. Mediates the transport from the cytosol into the lumen of the Golgi of 3'-phosphoadenylyl sulfate/adenosine 3'-phospho 5'-phosphosulfate (PAPS), a universal sulfuryl donor for sulfation events that take place in that compartment. The sequence is that of Adenosine 3'-phospho 5'-phosphosulfate transporter 1 from Homo sapiens (Human).